We begin with the raw amino-acid sequence, 170 residues long: Type II secretion system protein H (170 aa).

A propeptide spans 1-5 (leader sequence); the sequence is MRQRG. Phe-6 is modified (N-methylphenylalanine). A helical membrane pass occupies residues 6–29; the sequence is FTLLEMMLILLLMGVSAGMVLLAF.

Belongs to the GSP H family. Type II secretion is composed of four main components: the outer membrane complex, the inner membrane complex, the cytoplasmic secretion ATPase and the periplasm-spanning pseudopilus. Interacts with core component PulG. Cleaved by prepilin peptidase. Post-translationally, methylated by prepilin peptidase at the amino group of the N-terminal phenylalanine once the leader sequence is cleaved by prepilin peptidase.

It is found in the cell inner membrane. Its function is as follows. Component of the type II secretion system required for the energy-dependent secretion of extracellular factors such as proteases and toxins from the periplasm. Part of the pseudopilus tip complex that is critical for the recognition and binding of secretion substrates. In Klebsiella pneumoniae, this protein is Type II secretion system protein H (pulH).